An 883-amino-acid chain; its full sequence is Glutamate receptor 2 (883 aa).

The signal sequence occupies residues 1-24 (MQKIMHISVLLSPILWGLIFGVSS). The Extracellular portion of the chain corresponds to 25 to 543 (NSIQIGGLFP…GVFSFLDPLA (519 aa)). A disulfide bond links Cys-78 and Cys-330. Residues Asn-256, Asn-370, Asn-406, and Asn-413 are each glycosylated (N-linked (GlcNAc...) asparagine). The L-glutamate site is built by Pro-499, Thr-501, and Arg-506. A helical transmembrane segment spans residues 544–564 (YEIWMCIVFAYIGVSVVLFLV). The Cytoplasmic portion of the chain corresponds to 565-591 (SRFSPYEWHTEEFEDGRETQSSESTNE). The segment at residues 592 to 607 (FGIFNSLWFSLGAFMR) is an intramembrane region (helical; Pore-forming). Residues 608–610 (QGC) lie within the membrane without spanning it. Cys-610 carries S-palmitoyl cysteine lipidation. Residues 611–616 (DISPRS) are Cytoplasmic-facing. A helical membrane pass occupies residues 617–637 (LSGRIVGGVWWFFTLIIISSY). Residues 638-812 (TANLAAFLTV…EKTSALSLSN (175 aa)) are Extracellular-facing. L-glutamate is bound by residues Ser-675 and Thr-676. A Phosphoserine; by PKC modification is found at Ser-683. Ser-717 carries the phosphoserine; by PKG modification. Glu-726 lines the L-glutamate pocket. Cys-739 and Cys-794 form a disulfide bridge. Residues 813-833 (VAGVFYILVGGLGLAMLVALI) traverse the membrane as a helical segment. At 834–883 (EFCYKSRAEAKRMKVAKNAQNINPSSSQNSQNFATYKEGYNVYGIESVKI) the chain is on the cytoplasmic side. Cys-836 carries the S-palmitoyl cysteine lipid modification. A phosphoserine mark is found at Ser-860 and Ser-863. A required for interaction with IQSEC1 region spans residues 867–877 (ATYKEGYNVYG). Tyr-876 carries the phosphotyrosine modification. Ser-880 carries the post-translational modification Phosphoserine.

The protein belongs to the glutamate-gated ion channel (TC 1.A.10.1) family. GRIA2 subfamily. As to quaternary structure, homotetramer or heterotetramer of pore-forming glutamate receptor subunits. Tetramers may be formed by the dimerization of dimers. May interact with MPP4. Forms a ternary complex with GRIP1 and CSPG4. Interacts with ATAD1 in an ATP-dependent manner. ATAD1-catalyzed ATP hydrolysis disrupts binding to ATAD1 and to GRIP1 and leads to AMPAR complex disassembly. Interacts with GRIP1 and GRIP2. Interacts with NSF via its C-terminus. Isoform 1, but not isoform 3, interacts with PICK1. Interacts with CACNG2. Interacts with GRIA1 and SYNDIG1. Part of a complex containing GRIA2, NSF and NAPA and/or NAPB. Interacts with SNX27 (via PDZ domain); the interaction is required for recycling to the plasma membrane when endocytosed and prevent degradation in lysosomes. Interacts with LRFN1. Found in a complex with GRIA1, GRIA3, GRIA4, CNIH2, CNIH3, CACNG2, CACNG3, CACNG4, CACNG5, CACNG7 and CACNG8. Interacts with CACNG5. Interacts with OLFM2. Interacts with AP4B1, AP4E1 and AP4M1; probably indirect it mediates the somatodendritic localization of GRIA2 in neurons. Forms a complex with GRIP1, NSG1 and STX12; controls the intracellular fate of AMPAR and the endosomal sorting of the GRIA2 subunit toward recycling and membrane targeting. Interacts with IQSEC1; the interaction is required for ARF6 activation. Interacts (heterotetramer form) with CNIH2 and CNIH3; this interaction promotes expression at the plasma membrane and extensively modulates their gating properties by slowing deactivation and desensitization kinetics. Phosphorylation at Tyr-876 is required for interaction with IQSEC1 and ARF6 activation, which in turn triggers AMPAR internalization for persistent synaptic depression. In terms of processing, palmitoylated. Depalmitoylated upon L-glutamate stimulation. ZDHHC3/GODZ specifically palmitoylates Cys-610, which leads to Golgi retention and decreased cell surface expression. In contrast, Cys-836 palmitoylation does not affect cell surface expression but regulates stimulation-dependent endocytosis. Post-translationally, N-glycosylated. Ubiquitinated by RNF167, leading to its degradation.

The protein resides in the cell membrane. Its subcellular location is the postsynaptic cell membrane. The protein localises to the postsynaptic density membrane. It catalyses the reaction Ca(2+)(in) = Ca(2+)(out). The enzyme catalyses Na(+)(in) = Na(+)(out). Functionally, ionotropic glutamate receptor that functions as a ligand-gated cation channel, gated by L-glutamate and glutamatergic agonists such as alpha-amino-3-hydroxy-5-methyl-4-isoxazolepropionic acid (AMPA), quisqualic acid, and kainic acid. L-glutamate acts as an excitatory neurotransmitter at many synapses in the central nervous system and plays an important role in fast excitatory synaptic transmission. Binding of the excitatory neurotransmitter L-glutamate induces a conformation change, leading to the opening of the cation channel, and thereby converts the chemical signal to an electrical impulse upon entry of monovalent and divalent cations such as sodium and calcium. The receptor then desensitizes rapidly and enters in a transient inactive state, characterized by the presence of bound agonist. In the presence of CACNG4 or CACNG7 or CACNG8, shows resensitization which is characterized by a delayed accumulation of current flux upon continued application of L-glutamate. Through complex formation with NSG1, GRIP1 and STX12 controls the intracellular fate of AMPAR and the endosomal sorting of the GRIA2 subunit toward recycling and membrane targeting. The chain is Glutamate receptor 2 from Macaca fascicularis (Crab-eating macaque).